The chain runs to 804 residues: Leucine--tRNA ligase (804 aa).

A 'HIGH' region motif is present at residues 40–51 (PYPSGAGLHVGH). The 'KMSKS' region motif lies at 576 to 580 (KMSKS). K579 contributes to the ATP binding site.

It belongs to the class-I aminoacyl-tRNA synthetase family.

It is found in the cytoplasm. It carries out the reaction tRNA(Leu) + L-leucine + ATP = L-leucyl-tRNA(Leu) + AMP + diphosphate. The protein is Leucine--tRNA ligase of Staphylococcus saprophyticus subsp. saprophyticus (strain ATCC 15305 / DSM 20229 / NCIMB 8711 / NCTC 7292 / S-41).